The sequence spans 280 residues: Transcription factor MYB46 (280 aa).

2 HTH myb-type domains span residues Val-15–Leu-67 and Arg-68–Leu-122. DNA-binding regions (H-T-H motif) lie at residues Trp-43 to Leu-67 and Trp-95 to Ile-118. The disordered stretch occupies residues Ser-129–Ala-150.

Expressed at low levels in stems and siliques, specifically in xylem.

It is found in the nucleus. In terms of biological role, transcription activator. Involved in the regulation of secondary wall biosynthesis in fibers and vessels. Transcription activator of the mannan synthase CSLA9 that recognizes and binds to the DNA consensus sequence 5'-[AG][GT]T[AT]GGT[GA]-3' cis-regulatory element of CSLA9 promoter. Transcription factor that acts as a molecular switch in the NAC012/SND1-mediated transcriptional network regulating secondary wall biosynthesis. Is directly activated by NAC012/SND1. Functions redundantly with MYB83 in the transcriptional regulatory cascade leading to secondary wall formation in fibers and vessels. Transcription activator that binds to the DNA consensus sequence 5'-ACC[AT]A[AC][TC]-3', designated as the secondary wall MYB-responsive element (SMRE). Regulates directly numerous transcription factors and a number of genes involved in secondary wall biosynthesis that contain SMRE elements in their promoters. Is an obligate component of the transcriptional regulatory complex toward the commitment of secondary wall cellulose synthesis. Is required for functional expression of the three secondary wall CESA genes, CESA4, CESA7 and CESA8. The sequence is that of Transcription factor MYB46 from Arabidopsis thaliana (Mouse-ear cress).